A 213-amino-acid polypeptide reads, in one-letter code: Putative protein Brevis radix-like 3 (213 aa).

A disordered region spans residues Cys-7–Asp-27. One can recognise a BRX domain in the interval Arg-158–Leu-213.

The protein belongs to the BRX family.

The protein resides in the nucleus. The polypeptide is Putative protein Brevis radix-like 3 (BRXL3) (Oryza sativa subsp. japonica (Rice)).